A 447-amino-acid chain; its full sequence is N-succinylarginine dihydrolase (447 aa).

Substrate-binding positions include 19-28, N110, and 137-138; these read AGLSFGNEAS and HR. E174 is an active-site residue. R212 contacts substrate. The active site involves H248. Substrate-binding residues include D250 and N359. Catalysis depends on C365, which acts as the Nucleophile.

This sequence belongs to the succinylarginine dihydrolase family. As to quaternary structure, homodimer.

The enzyme catalyses N(2)-succinyl-L-arginine + 2 H2O + 2 H(+) = N(2)-succinyl-L-ornithine + 2 NH4(+) + CO2. It functions in the pathway amino-acid degradation; L-arginine degradation via AST pathway; L-glutamate and succinate from L-arginine: step 2/5. In terms of biological role, catalyzes the hydrolysis of N(2)-succinylarginine into N(2)-succinylornithine, ammonia and CO(2). The protein is N-succinylarginine dihydrolase of Escherichia fergusonii (strain ATCC 35469 / DSM 13698 / CCUG 18766 / IAM 14443 / JCM 21226 / LMG 7866 / NBRC 102419 / NCTC 12128 / CDC 0568-73).